The sequence spans 71 residues: uncharacterized protein (71 aa).

Residues 37-57 traverse the membrane as a helical segment; sequence IGVGVSDGVSAGVGVGVAMII.

It is found in the membrane. This is an uncharacterized protein from Dictyostelium discoideum (Social amoeba).